The sequence spans 1502 residues: MADRFSRFNEDRDFQGNHFDQYEEGHLEIEQASLDKPIESDNIGHRLLQKHGWKLGQGLGKSLQGRTDPIPIVVKYDVMGMGRMEMELDYAEDATERRRVLEVEKEDTEELRQKYKDYVDKEKAIAKALEDLRANFYCELCDKQYQKHQEFDNHINSYDHAHKQRLKDLKQREFARNVSSRSRKDEKKQEKALRRLHELAEQRKQAECAPGSGPMFKPTTVAVDEEGGEDDKDESATNSGTGATASCGLGSEFSTDKGGPFTAVQITNTTGLAQAPGLASQGISFGIKNNLGTPLQKLGVSFSFAKKAPVKLESIASVFKDHAEEGTSEDGTKPDEKSSDQGLQKVGDSDGSSNLDGKKEDEDPQDGGSLASTLSKLKRMKREEGAGATEPEYYHYIPPAHCKVKPNFPFLLFMRASEQMDGDNTTHPKNAPESKKGSSPKPKSCIKAAASQGAEKTVSEVSEQPKETSMTEPSEPGSKAEAKKALGGDVSDQSLESHSQKVSETQMCESNSSKETSLATPAGKESQEGPKHPTGPFFPVLSKDESTALQWPSELLIFTKAEPSISYSCNPLYFDFKLSRNKDARTKGTEKPKDIGSSSKDHLQGLDPGEPNKSKEVGGEKIVRSSGGRMDAPASGSACSGLNKQEPGGSHGSETEDTGRSLPSKKERSGKSHRHKKKKKHKKSSKHKRKHKADTEEKSSKAESGEKSKKRKKRKRKKNKSSAPADSERGPKPEPPGSGSPAPPRRRRRAQDDSQRRSLPAEEGSSGKKDEGGGGSSSQDHGGRKHKGELPPSSCQRRAGTKRSSRSSHRSQPSSGDEDSDDASSHRLHQKSPSQYSEEEEEEDSGSEHSRSRSRSGRRHSSHRSSRRSYSSSSDASSDQSCYSRQRSYSDDSYSDYSDRSRRHSKRSHDSDDSDYASSKHRSKRHKYSSSDDDYSLSCSQSRSRSRSHTRERSRSRGRSRSSSCSRSRSKRRSRSTTAHSWQRSRSYSRDRSRSTRSPSQRSGSRKRSWGHESPEERHSGRRDFIRSKIYRSQSPHYFRSGRGEGPGKKDDGRGDDSKATGPPSQNSNIGTGRGSEGDCSPEDKNSVTAKLLLEKIQSRKVERKPSVSEEVQATPNKAGPKLKDPPQGYFGPKLPPSLGNKPVLPLIGKLPATRKPNKKCEESGLERGEEQEQSETEEGPPGSSDALFGHQFPSEETTGPLLDPPPEESKSGEATADHPVAPLGTPAHSDCYPGDPTISHNYLPDPSDGDTLESLDSSSQPGPVESSLLPIAPDLEHFPSYAPPSGDPSIESTDGAEDASLAPLESQPITFTPEEMEKYSKLQQAAQQHIQQQLLAKQVKAFPASAALAPATPALQPIHIQQPATASATSITTVQHAILQHHAAAAAAAIGIHPHPHPQPLAQVHHIPQPHLTPISLSHLTHSIIPGHPATFLASHPIHIIPASAIHPGPFTFHPVPHAALYPTLLAPRPAAAAATALHLHPLLHPIFSGQDLQHPPSHGT.

Positions 40-86 constitute a G-patch domain; sequence SDNIGHRLLQKHGWKLGQGLGKSLQGRTDPIPIVVKYDVMGMGRMEM. A coiled-coil region spans residues 89–124; the sequence is DYAEDATERRRVLEVEKEDTEELRQKYKDYVDKEKA. The C2H2-type zinc-finger motif lies at 136 to 160; it reads FYCELCDKQYQKHQEFDNHINSYDH. Residues 172–251 form a disordered region; it reads REFARNVSSR…GATASCGLGS (80 aa). Residues 182–206 show a composition bias toward basic and acidic residues; it reads SRKDEKKQEKALRRLHELAEQRKQA. Acidic residues predominate over residues 223–233; that stretch reads VDEEGGEDDKD. A Glycyl lysine isopeptide (Lys-Gly) (interchain with G-Cter in SUMO2) cross-link involves residue Lys311. 2 stretches are compositionally biased toward basic and acidic residues: residues 323–339 and 424–436; these read AEEG…EKSS and NTTH…ESKK. Disordered stretches follow at residues 323 to 391 and 419 to 541; these read AEEG…ATEP and QMDG…FPVL. Residues 459–472 are compositionally biased toward polar residues; the sequence is SEVSEQPKETSMTE. Position 479 is an N6-acetyllysine (Lys479). Ser491 is modified (phosphoserine). The segment covering 491–519 has biased composition (polar residues); sequence SDQSLESHSQKVSETQMCESNSSKETSLA. Lys577 participates in a covalent cross-link: Glycyl lysine isopeptide (Lys-Gly) (interchain with G-Cter in SUMO2). 2 stretches are compositionally biased toward basic and acidic residues: residues 579-623 and 653-670; these read SRNK…EKIV and SETE…ERSG. The interval 579–1301 is disordered; that stretch reads SRNKDARTKG…ESTDGAEDAS (723 aa). A Phosphoserine modification is found at Ser653. Residues 671–692 show a composition bias toward basic residues; sequence KSHRHKKKKKHKKSSKHKRKHK. A compositionally biased stretch (basic and acidic residues) spans 693-707; that stretch reads ADTEEKSSKAESGEK. Residues 708–720 show a composition bias toward basic residues; that stretch reads SKKRKKRKRKKNK. Residues 733-743 are compositionally biased toward pro residues; that stretch reads PEPPGSGSPAP. A phosphoserine mark is found at Ser738, Ser740, and Ser758. Residues 750–772 are compositionally biased toward basic and acidic residues; the sequence is AQDDSQRRSLPAEEGSSGKKDEG. Basic residues-rich tracts occupy residues 799–809 and 852–867; these read AGTKRSSRSSH and SRSR…RSSR. Low complexity predominate over residues 868–896; that stretch reads RSYSSSSDASSDQSCYSRQRSYSDDSYSD. Phosphoserine is present on residues Ser911 and Ser914. A compositionally biased stretch (basic residues) spans 919–928; sequence SKHRSKRHKY. Residues Ser981, Ser1009, Ser1014, Ser1033, and Ser1035 each carry the phosphoserine modification. A compositionally biased stretch (basic and acidic residues) spans 1010-1027; it reads WGHESPEERHSGRRDFIR. The segment covering 1042–1059 has biased composition (basic and acidic residues); the sequence is GRGEGPGKKDDGRGDDSK. A Phosphoserine modification is found at Ser1081. 2 stretches are compositionally biased toward basic and acidic residues: residues 1093-1108 and 1159-1171; these read LLEK…KPSV and KKCE…RGEE. Residue Lys1105 forms a Glycyl lysine isopeptide (Lys-Gly) (interchain with G-Cter in SUMO2) linkage. Phosphoserine is present on Ser1107. The residue at position 1175 (Ser1175) is a Phosphoserine.

This chain is G patch domain-containing protein 8 (GPATCH8), found in Homo sapiens (Human).